The chain runs to 302 residues: Dermonecrotic toxin LiSicTox-alphaIA1bii (302 aa).

A signal peptide spans 1 to 14 (ARVVLGCWSVLSQA). The propeptide occupies 15-22 (AQTDDEER). Residue H34 is part of the active site. Mg(2+)-binding residues include E54 and D56. Catalysis depends on H70, which acts as the Nucleophile. 2 disulfides stabilise this stretch: C74/C80 and C76/C219. D114 contacts Mg(2+).

It belongs to the arthropod phospholipase D family. Class II subfamily. Class IIa sub-subfamily. Mg(2+) serves as cofactor. Expressed by the venom gland.

The protein resides in the secreted. It catalyses the reaction an N-(acyl)-sphingosylphosphocholine = an N-(acyl)-sphingosyl-1,3-cyclic phosphate + choline. It carries out the reaction an N-(acyl)-sphingosylphosphoethanolamine = an N-(acyl)-sphingosyl-1,3-cyclic phosphate + ethanolamine. The catalysed reaction is a 1-acyl-sn-glycero-3-phosphocholine = a 1-acyl-sn-glycero-2,3-cyclic phosphate + choline. The enzyme catalyses a 1-acyl-sn-glycero-3-phosphoethanolamine = a 1-acyl-sn-glycero-2,3-cyclic phosphate + ethanolamine. In terms of biological role, dermonecrotic toxins cleave the phosphodiester linkage between the phosphate and headgroup of certain phospholipids (sphingolipid and lysolipid substrates), forming an alcohol (often choline) and a cyclic phosphate. This toxin acts on sphingomyelin (SM). It may also act on ceramide phosphoethanolamine (CPE), lysophosphatidylcholine (LPC) and lysophosphatidylethanolamine (LPE), but not on lysophosphatidylserine (LPS), and lysophosphatidylglycerol (LPG). It acts by transphosphatidylation, releasing exclusively cyclic phosphate products as second products. Induces hemolysis, dermonecrosis, vascular permeability and platelet aggregation. This Loxosceles intermedia (Brown spider) protein is Dermonecrotic toxin LiSicTox-alphaIA1bii.